The sequence spans 98 residues: uncharacterized protein (98 aa).

The disordered stretch occupies residues 1–63 (MPRDKKLVHR…NGHSQPAIVA (63 aa)). Residues 14-29 (DVEDEDNDQREEEWSD) show a composition bias toward acidic residues. Residues 48 to 57 (EPSSASNGHS) show a composition bias toward polar residues.

This is an uncharacterized protein from Aedes vexans (Inland floodwater mosquito).